The primary structure comprises 430 residues: Mitochondrial distribution and morphology protein 10 (430 aa).

Positions 215 to 234 (SSSAMNPPSGTSASETNGSG) are enriched in polar residues. Disordered regions lie at residues 215–237 (SSSAMNPPSGTSASETNGSGPSV) and 339–393 (LGAN…GPKE).

It belongs to the MDM10 family. Component of the ER-mitochondria encounter structure (ERMES) or MDM complex, composed of MMM1, MDM10, MDM12 and MDM34. Associates with the mitochondrial outer membrane sorting assembly machinery SAM(core) complex.

It is found in the mitochondrion outer membrane. Functionally, component of the ERMES/MDM complex, which serves as a molecular tether to connect the endoplasmic reticulum and mitochondria. Components of this complex are involved in the control of mitochondrial shape and protein biogenesis and may function in phospholipid exchange. MDM10 is involved in the late assembly steps of the general translocase of the mitochondrial outer membrane (TOM complex). Functions in the TOM40-specific route of the assembly of outer membrane beta-barrel proteins, including the association of TOM40 with the receptor TOM22 and small TOM proteins. Can associate with the SAM(core) complex as well as the MDM12-MMM1 complex, both involved in late steps of the major beta-barrel assembly pathway, that is responsible for biogenesis of all outer membrane beta-barrel proteins. May act as a switch that shuttles between both complexes and channels precursor proteins into the TOM40-specific pathway. Plays a role in mitochondrial morphology and in the inheritance of mitochondria. This is Mitochondrial distribution and morphology protein 10 from Chaetomium globosum (strain ATCC 6205 / CBS 148.51 / DSM 1962 / NBRC 6347 / NRRL 1970) (Soil fungus).